A 210-amino-acid polypeptide reads, in one-letter code: Calcium-activated potassium channel subunit beta-4 (210 aa).

At 1-19 the chain is on the cytoplasmic side; it reads MAKLRVAYEYTEAEDKSIR. The chain crosses the membrane as a helical span at residues 20–40; it reads LGLFLIISGVVSLFIFGFCWL. Residues 41–167 lie on the Extracellular side of the membrane; it reads SPALQDLQAT…DVLLHRTHDE (127 aa). Residues N53 and N90 are each glycosylated (N-linked (GlcNAc...) asparagine). Residues 168–188 traverse the membrane as a helical segment; it reads IVLLHCFLWPLVTFVVGVLIV. Over 189-210 the chain is Cytoplasmic; sequence VLTICAKSLAVKAEAMKKRKFS.

This sequence belongs to the KCNMB (TC 8.A.14.1) family. KCNMB4 subfamily. Interacts with KCNMA1 tetramer. There are probably 4 molecules of KCMNB4 per KCNMA1 tetramer. Interacts with FMR1 (via N-terminus). Post-translationally, phosphorylated. Phosphorylation modulates its effect on KCNMA1 activation kinetics. In terms of processing, N-glycosylated. A highly glycosylated form is promoted by KCNMA1. Glycosylation, which is not required for the interaction with KCNMA1 and subcellular location, increases protection against charybdotoxin. In terms of tissue distribution, predominantly expressed in brain. In brain, it is expressed in the cerebellum, cerebral cortex, medulla, spinal cord, occipital pole, frontal lobe, temporal lobe, putamen, amygdala, caudate nucleus, corpus callosum, hippocampus, substantia nigra and thalamus. Weakly or not expressed in other tissues.

The protein resides in the membrane. Regulatory subunit of the calcium activated potassium KCNMA1 (maxiK) channel. Modulates the calcium sensitivity and gating kinetics of KCNMA1, thereby contributing to KCNMA1 channel diversity. Decreases the gating kinetics and calcium sensitivity of the KCNMA1 channel, but with fast deactivation kinetics. May decrease KCNMA1 channel openings at low calcium concentrations but increases channel openings at high calcium concentrations. Makes KCNMA1 channel resistant to 100 nM charybdotoxin (CTX) toxin concentrations. The chain is Calcium-activated potassium channel subunit beta-4 (KCNMB4) from Homo sapiens (Human).